A 413-amino-acid chain; its full sequence is Short-chain specific acyl-CoA dehydrogenase, mitochondrial (413 aa).

The N-terminal 24 residues, 1 to 24 (MAAALLARACGPVRGALWPRDCRR), are a transit peptide targeting the mitochondrion. The residue at position 27 (T27) is a Phosphothreonine. K51 carries the N6-acetyllysine; alternate modification. N6-succinyllysine; alternate is present on K51. K72 carries the post-translational modification N6-acetyllysine. Residue K129 is modified to N6-acetyllysine; alternate. An N6-succinyllysine; alternate modification is found at K129. FAD contacts are provided by residues 152-161 (FALSEPGNGS) and 185-187 (WIT). Position 161 (S161) interacts with substrate. The residue at position 208 (K208) is an N6-acetyllysine. An N6-acetyllysine; alternate modification is found at K262. K262 carries the N6-succinyllysine; alternate modification. Position 269–272 (269–272 (DMGR)) interacts with substrate. An FAD-binding site is contributed by R297. K306 is modified (N6-acetyllysine; alternate). Position 306 is an N6-succinyllysine; alternate (K306). FAD-binding positions include Q308 and 366-370 (QILGG). E393 functions as the Proton acceptor in the catalytic mechanism. Substrate is bound at residue G394. Residue 395–397 (TSE) participates in FAD binding.

This sequence belongs to the acyl-CoA dehydrogenase family. Homotetramer. FAD serves as cofactor.

It localises to the mitochondrion matrix. It catalyses the reaction a short-chain 2,3-saturated fatty acyl-CoA + oxidized [electron-transfer flavoprotein] + H(+) = a short-chain (2E)-enoyl-CoA + reduced [electron-transfer flavoprotein]. It carries out the reaction butanoyl-CoA + oxidized [electron-transfer flavoprotein] + H(+) = (2E)-butenoyl-CoA + reduced [electron-transfer flavoprotein]. The enzyme catalyses pentanoyl-CoA + oxidized [electron-transfer flavoprotein] + H(+) = (2E)-pentenoyl-CoA + reduced [electron-transfer flavoprotein]. The catalysed reaction is hexanoyl-CoA + oxidized [electron-transfer flavoprotein] + H(+) = (2E)-hexenoyl-CoA + reduced [electron-transfer flavoprotein]. The protein operates within lipid metabolism; mitochondrial fatty acid beta-oxidation. Its function is as follows. Short-chain specific acyl-CoA dehydrogenase is one of the acyl-CoA dehydrogenases that catalyze the first step of mitochondrial fatty acid beta-oxidation, an aerobic process breaking down fatty acids into acetyl-CoA and allowing the production of energy from fats. The first step of fatty acid beta-oxidation consists in the removal of one hydrogen from C-2 and C-3 of the straight-chain fatty acyl-CoA thioester, resulting in the formation of trans-2-enoyl-CoA. Among the different mitochondrial acyl-CoA dehydrogenases, short-chain specific acyl-CoA dehydrogenase acts specifically on acyl-CoAs with saturated 4 to 6 carbons long primary chains. The chain is Short-chain specific acyl-CoA dehydrogenase, mitochondrial (ACADS) from Sus scrofa (Pig).